Here is a 474-residue protein sequence, read N- to C-terminus: A-type ATP synthase subunit B (474 aa).

This sequence belongs to the ATPase alpha/beta chains family. Has multiple subunits with at least A(3), B(3), C, D, E, F, H, I and proteolipid K(x).

It localises to the cell membrane. Its function is as follows. Component of the A-type ATP synthase that produces ATP from ADP in the presence of a proton gradient across the membrane. The B chain is a regulatory subunit. The chain is A-type ATP synthase subunit B from Halorubrum lacusprofundi (strain ATCC 49239 / DSM 5036 / JCM 8891 / ACAM 34).